We begin with the raw amino-acid sequence, 150 residues long: UPF0178 protein PBPRA1738 (150 aa).

This sequence belongs to the UPF0178 family.

This chain is UPF0178 protein PBPRA1738, found in Photobacterium profundum (strain SS9).